The following is an 86-amino-acid chain: RNA-binding protein Hfq (86 aa).

The region spanning 12–73 is the Sm domain; that stretch reads DIFLNQVRKE…ISTISPQKPV (62 aa).

It belongs to the Hfq family. Homohexamer.

RNA chaperone that binds small regulatory RNA (sRNAs) and mRNAs to facilitate mRNA translational regulation in response to envelope stress, environmental stress and changes in metabolite concentrations. Also binds with high specificity to tRNAs. The chain is RNA-binding protein Hfq from Caldanaerobacter subterraneus subsp. tengcongensis (strain DSM 15242 / JCM 11007 / NBRC 100824 / MB4) (Thermoanaerobacter tengcongensis).